A 227-amino-acid chain; its full sequence is DNA repair protein RecO (227 aa).

The protein belongs to the RecO family.

Its function is as follows. Involved in DNA repair and RecF pathway recombination. The chain is DNA repair protein RecO from Pseudomonas putida (strain GB-1).